Reading from the N-terminus, the 272-residue chain is Ribosomal RNA small subunit methyltransferase A (272 aa).

The S-adenosyl-L-methionine site is built by asparagine 18, leucine 20, glycine 45, glutamate 66, aspartate 91, and asparagine 113.

The protein belongs to the class I-like SAM-binding methyltransferase superfamily. rRNA adenine N(6)-methyltransferase family. RsmA subfamily.

It localises to the cytoplasm. It carries out the reaction adenosine(1518)/adenosine(1519) in 16S rRNA + 4 S-adenosyl-L-methionine = N(6)-dimethyladenosine(1518)/N(6)-dimethyladenosine(1519) in 16S rRNA + 4 S-adenosyl-L-homocysteine + 4 H(+). Functionally, specifically dimethylates two adjacent adenosines (A1518 and A1519) in the loop of a conserved hairpin near the 3'-end of 16S rRNA in the 30S particle. May play a critical role in biogenesis of 30S subunits. This is Ribosomal RNA small subunit methyltransferase A from Yersinia pestis bv. Antiqua (strain Antiqua).